A 311-amino-acid polypeptide reads, in one-letter code: MNPKKLVIASRESLLAMWQAKHIQGRLKALYPDCEVEILGMTTRGDQILDKTLSKVGGKGLFVKELEQALYDGRADLAVHSIKDVPMDLPEGFALAAIGERANPFDAFVSNQYARLEEMPEGAVVGTSSLRREAQLRARYPHLLIKPLRGNVQTRLSKLDNGEYDAIILAAAGLQRLKLDGRIRMILSESDSLPAAGQGALGIEIAAHREDLYEVLKPLNHGVTNACVTAERALARALGGSCQVPLAAYCTEENGLLTLRGLVGHPDGSVVLRADAQAPAEYADALGRAVAKKLADDGARELIGAVLNTEN.

Residue Cys242 is modified to S-(dipyrrolylmethanemethyl)cysteine.

It belongs to the HMBS family. In terms of assembly, monomer. Dipyrromethane is required as a cofactor.

The catalysed reaction is 4 porphobilinogen + H2O = hydroxymethylbilane + 4 NH4(+). Its pathway is porphyrin-containing compound metabolism; protoporphyrin-IX biosynthesis; coproporphyrinogen-III from 5-aminolevulinate: step 2/4. In terms of biological role, tetrapolymerization of the monopyrrole PBG into the hydroxymethylbilane pre-uroporphyrinogen in several discrete steps. The sequence is that of Porphobilinogen deaminase (hemC) from Neisseria meningitidis serogroup A / serotype 4A (strain DSM 15465 / Z2491).